Consider the following 322-residue polypeptide: Transcription factor Atoh8 (322 aa).

Disordered stretches follow at residues P77–R96, I101–S144, and P159–A221. The segment covering I101–K111 has biased composition (basic and acidic residues). Residues T231–V244 are basic motif; degenerate. The 53-residue stretch at T231–L283 folds into the bHLH domain. Positions H245 to L283 are helix-loop-helix motif.

As to quaternary structure, efficient DNA binding requires dimerization with another bHLH protein. Interacts with NEUROG3 and NEUROD1. Interacts with ZFPM2; mediates indirect interaction with GATA4. Forms a heterodimer with TCF3; repress transcription of TCF3 and TCF3/NEUROG3 dimer-induced transactivation of E box-dependent promoters. In terms of tissue distribution, expressed by subsets of mature neurons. Expressed in kidney (podocytes). Expression is restricted to the atria, lung mesenchyme, and vascular smooth muscle.

The protein resides in the nucleus. The protein localises to the nucleus speckle. Its subcellular location is the cytoplasm. Functionally, transcription factor that binds a palindromic (canonical) core consensus DNA sequence 5'-CANNTG- 3' known as an E-box element, possibly as a heterodimer with other bHLH proteins. Regulates endothelial cell proliferation, migration and tube-like structures formation. Modulates endothelial cell differentiation through NOS3. May be implicated in specification and differentiation of neuronal cell lineages in the brain. May participate in kidney development and may be involved in podocyte differentiation. During early embryonic development is involved in tissue-specific differentiation processes that are dependent on class II bHLH factors and namely modulates the differentiation program initiated by the pro-endocrine factor NEUROG3. During myogenesis, may play a role during the transition of myoblasts from the proliferative phase to the differentiation phase. Positively regulates HAMP transcription in two ways, firstly by acting directly on the HAMP promoter via E-boxes binding and indirectly through increased phosphorylation of SMAD protein complex. Repress NEUROG3-dependent gene activation in a gene-specific manner through at least two mechanisms; requires only either the sequestering of a general partner such as TCF3 through heterodimerization, either also requires binding of the bHLH domain to DNA via a basic motif. The chain is Transcription factor Atoh8 from Mus musculus (Mouse).